A 1024-amino-acid chain; its full sequence is Beta-galactosidase (1024 aa).

2 residues coordinate substrate: Asn103 and Asp202. Residue Asp202 participates in Na(+) binding. The Mg(2+) site is built by Glu417, His419, and Glu462. Residues Glu462 and 538-541 each bind substrate; that span reads EYAH. Residue Glu462 is the Proton donor of the active site. Glu538 acts as the Nucleophile in catalysis. Asn598 lines the Mg(2+) pocket. Na(+) is bound by residues Phe602 and Asn605. The substrate site is built by Asn605 and Trp1000.

Belongs to the glycosyl hydrolase 2 family. In terms of assembly, homotetramer. Requires Mg(2+) as cofactor. Na(+) is required as a cofactor.

It carries out the reaction Hydrolysis of terminal non-reducing beta-D-galactose residues in beta-D-galactosides.. This chain is Beta-galactosidase, found in Escherichia coli O127:H6 (strain E2348/69 / EPEC).